We begin with the raw amino-acid sequence, 435 residues long: MMQNQYQGKIITIVGLGKTGLSCVAFFAEKQATIQVIDTREQPAGIEHLSDNVALHTGSLNLEWLLASDLIVMSPGLALATPEIQTAIQAGIEVVGDIELFVREAKAPIIAITGSNGKSTVTTLVSEMAQQAGIKVGMGGNIGIPALSLLNKGYELFVLELSSFQLETTYSLKAKAATILNVSQDHMDRYASGEHYRQAKLRIYENAEYVIVNDDDPLTYPLPSQSVGNLRHFAEHDAQYAIKYDQLCSGDQAVINTDQMLLTGRHNQLNALAAIALAEAAGINRTGIINGLRCYGGLAHRFQRVPTNDGVCWVNDSKATNVGSTVAALNGLPLSGTLYLLLGGDGKGADFSMLKALVNQPHIVCYCFGKDGKSLAELTTNSVLVDTMQQAIEQIRPLVKQGDMVLLSPACASLDQFNNFEERGDMFARLAQQAV.

114–120 (GSNGKST) contacts ATP.

It belongs to the MurCDEF family.

Its subcellular location is the cytoplasm. The catalysed reaction is UDP-N-acetyl-alpha-D-muramoyl-L-alanine + D-glutamate + ATP = UDP-N-acetyl-alpha-D-muramoyl-L-alanyl-D-glutamate + ADP + phosphate + H(+). It functions in the pathway cell wall biogenesis; peptidoglycan biosynthesis. Cell wall formation. Catalyzes the addition of glutamate to the nucleotide precursor UDP-N-acetylmuramoyl-L-alanine (UMA). The protein is UDP-N-acetylmuramoylalanine--D-glutamate ligase of Haemophilus ducreyi (strain 35000HP / ATCC 700724).